Consider the following 1948-residue polypeptide: [F-actin]-monooxygenase MICAL2 (1948 aa).

Positions 2 to 494 (GENEDEKQAQ…KHLYITKEMD (493 aa)) are monooxygenase domain. Residues Cys-97, 116-118 (EKR), 123-125 (RNN), Phe-183, Tyr-298, and Asp-398 each bind FAD. Residues 516–619 (DIRPNKLLTW…MVMYLSKFYE (104 aa)) enclose the Calponin-homology (CH) domain. Phosphoserine is present on Ser-631. Positions 660 to 681 (RKRTPRVDAQTEENDVNKRRRQ) match the Nuclear localization signal motif. Disordered stretches follow at residues 664–709 (PRVD…ESGN), 753–776 (SRPP…PPLK), and 891–923 (KRVP…DSVS). The span at 693–709 (SSRSLGSSQEYAKESGN) shows a compositional bias: polar residues. Over residues 896–917 (AHPPSPPSCLPSPDPAAAPSPP) the composition is skewed to pro residues. The LIM zinc-binding domain maps to 980–1042 (DTCYFCKKRV…KLHFAHCKTS (63 aa)). Residues Cys-982, Cys-985, His-1003, Cys-1006, Cys-1009, Cys-1012, Cys-1032, and His-1035 each coordinate Zn(2+). Disordered stretches follow at residues 1045–1134 (QRKR…GQDG), 1146–1185 (SEDS…QPLT), and 1233–1298 (QSNS…DDVS). The span at 1050-1059 (AELNQQREEE) shows a compositional bias: basic and acidic residues. Over residues 1233 to 1243 (QSNSTPMNQRA) the composition is skewed to polar residues. Low complexity predominate over residues 1254 to 1271 (SSSSSPSLPSSFSSASVP). Residues 1277 to 1292 (DSSSPQVTYNLHSPQI) are compositionally biased toward polar residues. The segment at 1300 to 1339 (TPIYLRRARAQGITKEIPLYLPHSPMLESTEHCLVSPDGE) is interaction with MAPK1. Disordered regions lie at residues 1478 to 1505 (QKKA…KSPL), 1519 to 1622 (SSEA…SSKV), 1672 to 1726 (GDFF…QAGK), and 1739 to 1767 (SGPG…QLSS). Residues 1522–1534 (AGKKTSSKPETKT) are compositionally biased toward basic and acidic residues. Low complexity predominate over residues 1570–1579 (KASAFFSLAS). The segment covering 1580 to 1591 (PTSKAAQASDLS) has biased composition (polar residues). Residues 1672-1682 (GDFFNSPKEKG) show a composition bias toward basic and acidic residues. Residue Ser-1677 is modified to Phosphoserine. Polar residues-rich tracts occupy residues 1698-1715 (VDST…TGQD) and 1747-1756 (EDTSSPTSSS). One can recognise a bMERB domain in the interval 1786–1936 (KQEELKRLHK…ERTQDQHFEN (151 aa)).

Belongs to the Mical family. As to quaternary structure, interacts with PLXNA4. Interacts with RAB1B. Interacts with MAPK1/ERK2. Interacts with RAB35, RAB8A, RAB10, RAB13 and RAB15 (in their GTP-bound forms); binding to RAB35 is of low affinity compared to other Rab proteins; at least in case of RAB8A may bind 2 molecules of RAB8A simultaneously through a high and a low affinity binding site, respectively. May interact with MAPK1/ERK2. Requires FAD as cofactor.

It localises to the nucleus. Its subcellular location is the cytoplasm. It carries out the reaction L-methionyl-[F-actin] + NADPH + O2 + H(+) = L-methionyl-(R)-S-oxide-[F-actin] + NADP(+) + H2O. Functionally, methionine monooxygenase that promotes depolymerization of F-actin by mediating oxidation of residues 'Met-44' and 'Met-47' on actin to form methionine-sulfoxide, resulting in actin filament disassembly and preventing repolymerization. Regulates the disassembly of branched actin networks also by oxidizing ARP3B-containing ARP2/3 complexes leading to ARP3B dissociation from the network. Acts as a key regulator of the SRF signaling pathway elicited by nerve growth factor and serum: mediates oxidation and subsequent depolymerization of nuclear actin, leading to increase MKL1/MRTF-A presence in the nucleus and promote SRF:MKL1/MRTF-A-dependent gene transcription. Does not activate SRF:MKL1/MRTF-A through RhoA. In Rattus norvegicus (Rat), this protein is [F-actin]-monooxygenase MICAL2.